A 262-amino-acid chain; its full sequence is uncharacterized protein (262 aa).

Residues 1-211 form the Radical SAM core domain; sequence MAFHVMIIPS…LLYLLDSYLE (211 aa). Cysteine 13, cysteine 17, and cysteine 20 together coordinate [4Fe-4S] cluster.

Belongs to the radical SAM superfamily. Anaerobic sulfatase-maturating enzyme family. [4Fe-4S] cluster serves as cofactor.

This is an uncharacterized protein from Methanothermobacter thermautotrophicus (strain ATCC 29096 / DSM 1053 / JCM 10044 / NBRC 100330 / Delta H) (Methanobacterium thermoautotrophicum).